A 340-amino-acid polypeptide reads, in one-letter code: Ketol-acid reductoisomerase (NADP(+)) (340 aa).

Positions 2–182 constitute a KARI N-terminal Rossmann domain; the sequence is AELYYDNQAD…GCTRAGVLRT (181 aa). NADP(+) is bound by residues 25–28, Ser-51, Ser-53, and 83–86; these read FGSQ and DIGQ. Residue His-108 is part of the active site. Gly-134 contributes to the NADP(+) binding site. The region spanning 183 to 328 is the KARI C-terminal knotted domain; the sequence is TFAEETETDL…RELRRMMPFV (146 aa). Mg(2+)-binding residues include Asp-191, Glu-195, Glu-227, and Glu-231. Ser-252 is a substrate binding site.

This sequence belongs to the ketol-acid reductoisomerase family. It depends on Mg(2+) as a cofactor.

The enzyme catalyses (2R)-2,3-dihydroxy-3-methylbutanoate + NADP(+) = (2S)-2-acetolactate + NADPH + H(+). It catalyses the reaction (2R,3R)-2,3-dihydroxy-3-methylpentanoate + NADP(+) = (S)-2-ethyl-2-hydroxy-3-oxobutanoate + NADPH + H(+). Its pathway is amino-acid biosynthesis; L-isoleucine biosynthesis; L-isoleucine from 2-oxobutanoate: step 2/4. The protein operates within amino-acid biosynthesis; L-valine biosynthesis; L-valine from pyruvate: step 2/4. Its function is as follows. Involved in the biosynthesis of branched-chain amino acids (BCAA). Catalyzes an alkyl-migration followed by a ketol-acid reduction of (S)-2-acetolactate (S2AL) to yield (R)-2,3-dihydroxy-isovalerate. In the isomerase reaction, S2AL is rearranged via a Mg-dependent methyl migration to produce 3-hydroxy-3-methyl-2-ketobutyrate (HMKB). In the reductase reaction, this 2-ketoacid undergoes a metal-dependent reduction by NADPH to yield (R)-2,3-dihydroxy-isovalerate. In Chloroflexus aggregans (strain MD-66 / DSM 9485), this protein is Ketol-acid reductoisomerase (NADP(+)).